Consider the following 262-residue polypeptide: Acyl-[acyl-carrier-protein]--UDP-N-acetylglucosamine O-acyltransferase (262 aa).

Belongs to the transferase hexapeptide repeat family. LpxA subfamily. In terms of assembly, homotrimer.

The protein resides in the cytoplasm. It catalyses the reaction a (3R)-hydroxyacyl-[ACP] + UDP-N-acetyl-alpha-D-glucosamine = a UDP-3-O-[(3R)-3-hydroxyacyl]-N-acetyl-alpha-D-glucosamine + holo-[ACP]. It participates in glycolipid biosynthesis; lipid IV(A) biosynthesis; lipid IV(A) from (3R)-3-hydroxytetradecanoyl-[acyl-carrier-protein] and UDP-N-acetyl-alpha-D-glucosamine: step 1/6. Functionally, involved in the biosynthesis of lipid A, a phosphorylated glycolipid that anchors the lipopolysaccharide to the outer membrane of the cell. The polypeptide is Acyl-[acyl-carrier-protein]--UDP-N-acetylglucosamine O-acyltransferase (Burkholderia ambifaria (strain ATCC BAA-244 / DSM 16087 / CCUG 44356 / LMG 19182 / AMMD) (Burkholderia cepacia (strain AMMD))).